The following is a 570-amino-acid chain: Putative diflavin flavoprotein A 5 (570 aa).

Residues 38–231 form a zinc metallo-hydrolase region; that stretch reads ERGTTSNSYV…LQVRLYAVGH (194 aa). The 143-residue stretch at 260–402 folds into the Flavodoxin-like domain; sequence VALLYASAYG…VGTDFAQTLK (143 aa). Positions 421–570 are flavodoxin-reductase-like; sequence VGRIVGSVCV…INHRKTGNHY (150 aa).

It in the N-terminal section; belongs to the zinc metallo-hydrolase group 3 family. In the C-terminal section; belongs to the flavodoxin reductase family. The cofactor is Fe cation.

Its function is as follows. Mediates electron transfer from NADH to oxygen, reducing it to water. This modular protein has 3 redox cofactors, in other organisms the same activity requires 2 or 3 proteins. The polypeptide is Putative diflavin flavoprotein A 5 (dfa5) (Nostoc sp. (strain PCC 7120 / SAG 25.82 / UTEX 2576)).